The primary structure comprises 297 residues: Heme A synthase (297 aa).

The Cytoplasmic segment spans residues M1–S6. A helical membrane pass occupies residues I7–T27. Residues K28–R62 are Extracellular-facing. Cysteines 35 and 42 form a disulfide. E58 is an active-site residue. H61 provides a ligand contact to heme o. The chain crosses the membrane as a helical span at residues A63–F83. Residues K84–K90 lie on the Cytoplasmic side of the membrane. Residues I91–V111 traverse the membrane as a helical segment. At V112–A121 the chain is on the extracellular side. The chain crosses the membrane as a helical span at residues L122–M142. Residue H123 participates in heme o binding. Topologically, residues E143–L160 are cytoplasmic. Residues L161–V181 form a helical membrane-spanning segment. The Extracellular portion of the chain corresponds to G182–E201. Residues C187 and C193 are joined by a disulfide bond. The helical transmembrane segment at A202–V222 threads the bilayer. H208 is a binding site for heme b. The Cytoplasmic portion of the chain corresponds to H223 to T236. Residues G237–L257 form a helical membrane-spanning segment. The Extracellular segment spans residues G258–T262. Residues Y263 to A283 form a helical membrane-spanning segment. H268 provides a ligand contact to heme b. Over Y284–R297 the chain is Cytoplasmic.

It belongs to the COX15/CtaA family. Type 1 subfamily. As to quaternary structure, interacts with CtaB. It depends on heme b as a cofactor.

The protein localises to the cell membrane. It carries out the reaction Fe(II)-heme o + 2 A + H2O = Fe(II)-heme a + 2 AH2. It participates in porphyrin-containing compound metabolism; heme A biosynthesis; heme A from heme O: step 1/1. Catalyzes the conversion of heme O to heme A by two successive hydroxylations of the methyl group at C8. The first hydroxylation forms heme I, the second hydroxylation results in an unstable dihydroxymethyl group, which spontaneously dehydrates, resulting in the formyl group of heme A. This is Heme A synthase from Exiguobacterium sibiricum (strain DSM 17290 / CCUG 55495 / CIP 109462 / JCM 13490 / 255-15).